Reading from the N-terminus, the 490-residue chain is Betaine aldehyde dehydrogenase (490 aa).

Aspartate 93 is a binding site for K(+). 150 to 152 (GAW) contributes to the NAD(+) binding site. The active-site Charge relay system is the lysine 162. Residue 176-179 (KPSE) participates in NAD(+) binding. A K(+)-binding site is contributed by valine 180. Residue 230–233 (GIAS) coordinates NAD(+). Residue leucine 246 coordinates K(+). The Proton acceptor role is filled by glutamate 252. 3 residues coordinate NAD(+): glycine 254, cysteine 286, and glutamate 387. Cysteine 286 serves as the catalytic Nucleophile. Cysteine 286 carries the cysteine sulfenic acid (-SOH) modification. Lysine 457 and glycine 460 together coordinate K(+). Glutamate 464 serves as the catalytic Charge relay system.

The protein belongs to the aldehyde dehydrogenase family. Dimer of dimers. The cofactor is K(+).

It catalyses the reaction betaine aldehyde + NAD(+) + H2O = glycine betaine + NADH + 2 H(+). The protein operates within amine and polyamine biosynthesis; betaine biosynthesis via choline pathway; betaine from betaine aldehyde: step 1/1. Functionally, involved in the biosynthesis of the osmoprotectant glycine betaine. Catalyzes the irreversible oxidation of betaine aldehyde to the corresponding acid. The sequence is that of Betaine aldehyde dehydrogenase from Yersinia pseudotuberculosis serotype IB (strain PB1/+).